Consider the following 470-residue polypeptide: Glutamate--tRNA ligase 1 (470 aa).

The short motif at Pro-15–Thr-25 is the 'HIGH' region element. Positions Lys-241–Arg-245 match the 'KMSKS' region motif. Lys-244 contacts ATP.

Belongs to the class-I aminoacyl-tRNA synthetase family. Glutamate--tRNA ligase type 1 subfamily. As to quaternary structure, monomer.

The protein resides in the cytoplasm. It catalyses the reaction tRNA(Glu) + L-glutamate + ATP = L-glutamyl-tRNA(Glu) + AMP + diphosphate. In terms of biological role, catalyzes the attachment of glutamate to tRNA(Glu) in a two-step reaction: glutamate is first activated by ATP to form Glu-AMP and then transferred to the acceptor end of tRNA(Glu). The sequence is that of Glutamate--tRNA ligase 1 from Jannaschia sp. (strain CCS1).